The chain runs to 81 residues: Cortexin-3 (81 aa).

A helical membrane pass occupies residues Met-29 to Phe-49.

It belongs to the cortexin family.

The protein localises to the membrane. This is Cortexin-3 (CTXN3) from Homo sapiens (Human).